The following is a 299-amino-acid chain: Bifunctional protein FolD (299 aa).

Residues 169–171 (GRS), serine 194, and isoleucine 235 each bind NADP(+).

It belongs to the tetrahydrofolate dehydrogenase/cyclohydrolase family. In terms of assembly, homodimer.

The enzyme catalyses (6R)-5,10-methylene-5,6,7,8-tetrahydrofolate + NADP(+) = (6R)-5,10-methenyltetrahydrofolate + NADPH. The catalysed reaction is (6R)-5,10-methenyltetrahydrofolate + H2O = (6R)-10-formyltetrahydrofolate + H(+). The protein operates within one-carbon metabolism; tetrahydrofolate interconversion. Catalyzes the oxidation of 5,10-methylenetetrahydrofolate to 5,10-methenyltetrahydrofolate and then the hydrolysis of 5,10-methenyltetrahydrofolate to 10-formyltetrahydrofolate. In Nostoc sp. (strain PCC 7120 / SAG 25.82 / UTEX 2576), this protein is Bifunctional protein FolD.